A 612-amino-acid chain; its full sequence is Dihydroxy-acid dehydratase (612 aa).

Aspartate 81 provides a ligand contact to Mg(2+). Cysteine 122 serves as a coordination point for [2Fe-2S] cluster. Mg(2+) is bound by residues aspartate 123 and lysine 124. The residue at position 124 (lysine 124) is an N6-carboxylysine. Position 195 (cysteine 195) interacts with [2Fe-2S] cluster. Glutamate 491 contacts Mg(2+). The Proton acceptor role is filled by serine 517.

Belongs to the IlvD/Edd family. As to quaternary structure, homodimer. It depends on [2Fe-2S] cluster as a cofactor. Mg(2+) serves as cofactor.

The enzyme catalyses (2R)-2,3-dihydroxy-3-methylbutanoate = 3-methyl-2-oxobutanoate + H2O. The catalysed reaction is (2R,3R)-2,3-dihydroxy-3-methylpentanoate = (S)-3-methyl-2-oxopentanoate + H2O. The protein operates within amino-acid biosynthesis; L-isoleucine biosynthesis; L-isoleucine from 2-oxobutanoate: step 3/4. Its pathway is amino-acid biosynthesis; L-valine biosynthesis; L-valine from pyruvate: step 3/4. In terms of biological role, functions in the biosynthesis of branched-chain amino acids. Catalyzes the dehydration of (2R,3R)-2,3-dihydroxy-3-methylpentanoate (2,3-dihydroxy-3-methylvalerate) into 2-oxo-3-methylpentanoate (2-oxo-3-methylvalerate) and of (2R)-2,3-dihydroxy-3-methylbutanoate (2,3-dihydroxyisovalerate) into 2-oxo-3-methylbutanoate (2-oxoisovalerate), the penultimate precursor to L-isoleucine and L-valine, respectively. This is Dihydroxy-acid dehydratase from Sinorhizobium fredii (strain NBRC 101917 / NGR234).